The sequence spans 106 residues: UPF0060 membrane protein AZC_0909 (106 aa).

A run of 4 helical transmembrane segments spans residues 4-24 (PLFALAALAEIAGCFAFWHVV), 27-47 (GGSPLWLAPGVLSLVAFAALL), 58-78 (AFAAYGGIYILASLGWMWAAE), and 84-104 (RFDALGAAICLAGACVILFAP).

It belongs to the UPF0060 family.

Its subcellular location is the cell inner membrane. The sequence is that of UPF0060 membrane protein AZC_0909 from Azorhizobium caulinodans (strain ATCC 43989 / DSM 5975 / JCM 20966 / LMG 6465 / NBRC 14845 / NCIMB 13405 / ORS 571).